A 122-amino-acid polypeptide reads, in one-letter code: Venom protein 7.1 (122 aa).

Positions 1-19 are cleaved as a signal peptide; the sequence is MRFSIISASLVLIFANVKA.

Post-translationally, contains 3 disulfide bonds. Expressed by the venom gland.

Its subcellular location is the secreted. The protein is Venom protein 7.1 of Lychas mucronatus (Chinese swimming scorpion).